The chain runs to 448 residues: Major capsid protein (448 aa).

Residues 104-127 are a coiled coil; the sequence is ITKEKQYDAEEAEHKVFEREMPNV. The BIG2 domain maps to 348 to 425; that stretch reads AVTQVIVSPN…ATVDIGTEDK (78 aa).

It belongs to the phi29likevirus major capsid protein family. Homohexamer. Homopentamer. The prolate capsid is composed of pentamers and hexamers of the capsid protein.

The protein localises to the virion. In terms of biological role, assembles to form a prolate capsid shell of about 54 nm in length and 45 nm in width, with a T=3, Q=5 symmetry. This chain is Major capsid protein (8), found in Bacillus subtilis (Bacteriophage PZA).